Consider the following 233-residue polypeptide: Zinc import ATP-binding protein ZnuC (233 aa).

One can recognise an ABC transporter domain in the interval 6 to 222 (IEFRNVSKKF…SEFSNALSSL (217 aa)). 38 to 45 (GPNGAGKT) serves as a coordination point for ATP.

The protein belongs to the ABC transporter superfamily. Zinc importer (TC 3.A.1.15.5) family. As to quaternary structure, the complex is composed of two ATP-binding proteins (ZnuC), two transmembrane proteins (ZnuB) and a solute-binding protein (ZnuA).

Its subcellular location is the cell inner membrane. The catalysed reaction is Zn(2+)(out) + ATP(in) + H2O(in) = Zn(2+)(in) + ADP(in) + phosphate(in) + H(+)(in). Functionally, part of the ABC transporter complex ZnuABC involved in zinc import. Responsible for energy coupling to the transport system. The sequence is that of Zinc import ATP-binding protein ZnuC from Rickettsia prowazekii (strain Madrid E).